Consider the following 546-residue polypeptide: Chaperonin GroEL (546 aa).

ATP contacts are provided by residues 30–33 (TLGP), lysine 51, 87–91 (DGTTT), glycine 415, and aspartate 496. Residues 527-546 (EKKAPAGAPGGMGGMGDMDF) are disordered. The span at 534–546 (APGGMGGMGDMDF) shows a compositional bias: gly residues.

This sequence belongs to the chaperonin (HSP60) family. Forms a cylinder of 14 subunits composed of two heptameric rings stacked back-to-back. Interacts with the co-chaperonin GroES.

The protein localises to the cytoplasm. The catalysed reaction is ATP + H2O + a folded polypeptide = ADP + phosphate + an unfolded polypeptide.. Functionally, together with its co-chaperonin GroES, plays an essential role in assisting protein folding. The GroEL-GroES system forms a nano-cage that allows encapsulation of the non-native substrate proteins and provides a physical environment optimized to promote and accelerate protein folding. This Rhodospirillum centenum (strain ATCC 51521 / SW) protein is Chaperonin GroEL.